Reading from the N-terminus, the 143-residue chain is Transmembrane protein 207 (143 aa).

Positions 1–29 (MSTSSPFRVASKIVTAGCLCLPLFQRVLS) are cleaved as a signal peptide. A helical transmembrane segment spans residues 52–72 (IWFFLLIFLVVLLCGVVLFCL).

As to quaternary structure, interacts with WWOX.

It localises to the membrane. This is Transmembrane protein 207 from Mus musculus (Mouse).